The primary structure comprises 353 residues: Farnesyl pyrophosphate synthase (353 aa).

Isopentenyl diphosphate-binding residues include Lys-57, Arg-60, and Gln-96. Lys-57 is modified (N6-(2-hydroxyisobutyryl)lysine; alternate). Lys-57 carries the post-translational modification N6-acetyllysine; alternate. Positions 103 and 107 each coordinate Mg(2+). Arg-112 provides a ligand contact to dimethylallyl diphosphate. Arg-113 lines the isopentenyl diphosphate pocket. Dimethylallyl diphosphate contacts are provided by Lys-200, Thr-201, Gln-240, Lys-257, and Lys-266.

The protein belongs to the FPP/GGPP synthase family. As to quaternary structure, homodimer. Interacts with RSAD2. Interacts with bovine leukemia virus (BLV) protein G4. Mg(2+) is required as a cofactor.

Its subcellular location is the cytoplasm. It catalyses the reaction isopentenyl diphosphate + dimethylallyl diphosphate = (2E)-geranyl diphosphate + diphosphate. The catalysed reaction is isopentenyl diphosphate + (2E)-geranyl diphosphate = (2E,6E)-farnesyl diphosphate + diphosphate. It participates in isoprenoid biosynthesis; farnesyl diphosphate biosynthesis; farnesyl diphosphate from geranyl diphosphate and isopentenyl diphosphate: step 1/1. Its pathway is isoprenoid biosynthesis; geranyl diphosphate biosynthesis; geranyl diphosphate from dimethylallyl diphosphate and isopentenyl diphosphate: step 1/1. Inactivated by interferon-induced RSAD2. This inactivation may result of disruption of lipid rafts at the plasma membrane, and thus have an antiviral effect since many enveloped viruses need lipid rafts to bud efficiently out of the cell. Functionally, key enzyme in isoprenoid biosynthesis which catalyzes the formation of farnesyl diphosphate (FPP), a precursor for several classes of essential metabolites including sterols, dolichols, carotenoids, and ubiquinones. FPP also serves as substrate for protein farnesylation and geranylgeranylation. Catalyzes the sequential condensation of isopentenyl pyrophosphate with the allylic pyrophosphates, dimethylallyl pyrophosphate, and then with the resultant geranylpyrophosphate to the ultimate product farnesyl pyrophosphate. The protein is Farnesyl pyrophosphate synthase (FDPS) of Bos taurus (Bovine).